The chain runs to 430 residues: UDP-glucuronate 4-epimerase 3 (430 aa).

2 helical membrane-spanning segments follow: residues 29–49 (SVAK…IFFY) and 90–110 (GFSV…SAAL). Residue 92–123 (SVLVTGAAGFVGTHVSAALKRRGDGVLGLDNF) participates in NAD(+) binding. Tyrosine 242 acts as the Proton acceptor in catalysis.

Belongs to the NAD(P)-dependent epimerase/dehydratase family. In terms of assembly, homodimer. In terms of tissue distribution, in roots, leaves, siliques, flowers, pollen and stems.

It is found in the golgi apparatus. Its subcellular location is the golgi stack membrane. The catalysed reaction is UDP-alpha-D-glucuronate = UDP-alpha-D-galacturonate. Involved in the synthesis of the negatively charged monosaccharide that forms the backbone of pectic cell wall components. This is UDP-glucuronate 4-epimerase 3 (GAE3) from Arabidopsis thaliana (Mouse-ear cress).